A 378-amino-acid chain; its full sequence is Chloroplast stem-loop binding protein of 41 kDa b, chloroplastic (378 aa).

Residues 1-50 constitute a chloroplast transit peptide; the sequence is MAKMMMLQQHQPSFSLLTSSLSDFNGAKLHLQVQYKRKVHQPKGALYVSA. The residue at position 240 (serine 240) is a Phosphoserine.

The protein belongs to the NAD(P)-dependent epimerase/dehydratase family. As to quaternary structure, component of a complex made of CSP41A, CSP41B, ribosomes, and the plastid-encoded RNA polymerase. Interacts with CSP41A. Binds DNA when in complex with PRIN2. In terms of tissue distribution, highly expressed in seedlings, particularly in photosynthetically active organs. Mostly expressed in young and mature leaves, and, to a lower extent, in flowers. Low expression in etiolated seedlings compared to green seedlings.

It localises to the plastid. It is found in the chloroplast. Its subcellular location is the plastoglobule. The protein localises to the cytoplasm. Its function is as follows. Binds and cleaves RNA, particularly in stem-loops. Associates with pre-ribosomal particles in chloroplasts, and participates in chloroplast ribosomal RNA metabolism, probably during the final steps of 23S rRNA maturation. May enhance transcription by the plastid-encoded polymerase and translation in plastid via the stabilization of ribosome assembly intermediates. Required for chloroplast integrity. Involved in the regulation of the circadian system. Involved in the regulation of heteroglycans and monosaccharide mobilization. Required for full expression of genes transcribed by the plastid-encoded RNA polymerase (PEP). Essential for embryo development. The chain is Chloroplast stem-loop binding protein of 41 kDa b, chloroplastic (CSP41B) from Arabidopsis thaliana (Mouse-ear cress).